Here is a 476-residue protein sequence, read N- to C-terminus: Aspartyl/glutamyl-tRNA(Asn/Gln) amidotransferase subunit B (476 aa).

Belongs to the GatB/GatE family. GatB subfamily. As to quaternary structure, heterotrimer of A, B and C subunits.

The enzyme catalyses L-glutamyl-tRNA(Gln) + L-glutamine + ATP + H2O = L-glutaminyl-tRNA(Gln) + L-glutamate + ADP + phosphate + H(+). It catalyses the reaction L-aspartyl-tRNA(Asn) + L-glutamine + ATP + H2O = L-asparaginyl-tRNA(Asn) + L-glutamate + ADP + phosphate + 2 H(+). Functionally, allows the formation of correctly charged Asn-tRNA(Asn) or Gln-tRNA(Gln) through the transamidation of misacylated Asp-tRNA(Asn) or Glu-tRNA(Gln) in organisms which lack either or both of asparaginyl-tRNA or glutaminyl-tRNA synthetases. The reaction takes place in the presence of glutamine and ATP through an activated phospho-Asp-tRNA(Asn) or phospho-Glu-tRNA(Gln). The chain is Aspartyl/glutamyl-tRNA(Asn/Gln) amidotransferase subunit B from Oleidesulfovibrio alaskensis (strain ATCC BAA-1058 / DSM 17464 / G20) (Desulfovibrio alaskensis).